The primary structure comprises 307 residues: Ribosomal protein L11 methyltransferase (307 aa).

The S-adenosyl-L-methionine site is built by threonine 154, glycine 178, aspartate 200, and asparagine 242.

This sequence belongs to the methyltransferase superfamily. PrmA family.

It localises to the cytoplasm. The enzyme catalyses L-lysyl-[protein] + 3 S-adenosyl-L-methionine = N(6),N(6),N(6)-trimethyl-L-lysyl-[protein] + 3 S-adenosyl-L-homocysteine + 3 H(+). Methylates ribosomal protein L11. This is Ribosomal protein L11 methyltransferase from Syntrophotalea carbinolica (strain DSM 2380 / NBRC 103641 / GraBd1) (Pelobacter carbinolicus).